Here is a 2193-residue protein sequence, read N- to C-terminus: Highly reducing polyketide synthase VdtX (2193 aa).

Positions 1-417 (MAICGIAVRL…GVNAHVIIES (417 aa)) constitute a Ketosynthase family 3 (KS3) domain. Active-site for beta-ketoacyl synthase activity residues include C170, H306, and H340. The segment at 513–809 (VFAGQGAQWP…HPYVPCLIRF (297 aa)) is malonyl-CoA:ACP transacylase (MAT) domain. The interval 877 to 1001 (HELLGTRVVD…GEVAQENLSR (125 aa)) is N-terminal hotdog fold. The dehydratase (DH) domain stretch occupies residues 877–1128 (HELLGTRVVD…DIVLRPLGAN (252 aa)). Residues 877-1202 (HELLGTRVVD…LQRQPKPSSE (326 aa)) enclose the PKS/mFAS DH domain. Catalysis depends on H909, which acts as the Proton acceptor; for dehydratase activity. The C-terminal hotdog fold stretch occupies residues 1032 to 1202 (SVTSNTVSGR…LQRQPKPSSE (171 aa)). The active-site Proton donor; for dehydratase activity is the D1093. Residues 1256–1390 (NYLNEPQQRI…DRWDSILKAA (135 aa)) form a methyltransferase (CMet) domain region. Residues 1575-1783 (GQQVQLLGDD…SGQHIGQLRL (209 aa)) are enoyl reductase (ER) domain. The tract at residues 1807 to 1981 (ASYLLVGGLG…ASVIDIGEVQ (175 aa)) is ketoreductase (KR) domain. The 82-residue stretch at 2102 to 2183 (PSATQFVSLE…AMGEHVIREL (82 aa)) folds into the Carrier domain. Position 2143 is an O-(pantetheine 4'-phosphoryl)serine (S2143).

Functionally, highly reducing polyketide synthase; part of the gene cluster that mediates the biosynthesis of viriditoxin, one of the 'classical' secondary metabolites produced by fungi and that has antibacterial activity. The first step is performed by the polyketide synthase VdtA which condenses one acetyl-CoA and 6 malonyl-CoA units to form the heptaketide monomer backbone of viriditoxin. The product of VdtA is then O-methylated on C7 by the O-methyltransferase VdtC. The O-methyl group is important for the stereoselective coupling of the monomers at the final step of viriditoxin biosynthesis. The short-chain dehydrogenase/reductase VdtF is involved in the reduction of the C3-C4 double bond. The FAD-binding monooxygenase VdtE then converts the ketone group into a methyl-ester group to yield semi-viriditoxin. Finally, the laccase VdtB is involved in dimerization of 2 semi-viriditoxin molecules to yield the final viriditoxin. The non-catalytic carboxylesterase-like protein VdtD affects the stereochemistical outcome of the coupling. The highly reducing polyketide synthase VdtX is not involved in viriditoxin synthesis, but might possibly play a role in the production of additional metabolites not identified yet. The chain is Highly reducing polyketide synthase VdtX from Byssochlamys spectabilis (Paecilomyces variotii).